A 382-amino-acid chain; its full sequence is Alpha-2B adrenergic receptor (382 aa).

Residues 1 to 25 (AIAAVITFLILFTIFGNALVILAVL) traverse the membrane as a helical segment. Residues 26–36 (TSRSLRAPQNL) lie on the Cytoplasmic side of the membrane. The chain crosses the membrane as a helical span at residues 37 to 62 (FLVSLAAADILVATLIIPFSLANELL). The Extracellular segment spans residues 63-72 (GYWYFRHTWC). Residues Cys72 and Cys151 are joined by a disulfide bond. The helical transmembrane segment at 73–95 (EVYLALDVLFCTSSIVHLCAISL) threads the bilayer. The Cytoplasmic portion of the chain corresponds to 96–117 (DRYWSVSRALEYNSKRTPRRIK). The chain crosses the membrane as a helical span at residues 118-140 (GIILTVWLIAAFISLPPLIYKGD). Over 141-156 (KGKKPGGRPQCKLNEE) the chain is Extracellular. A helical membrane pass occupies residues 157–180 (AWYILSSSIGSFFAPCLIMILVYL). Over 181 to 346 (RIYLIAKRRN…MNREKRFTFV (166 aa)) the chain is Cytoplasmic. The segment at 192-305 (QGPHGKQAPG…QGTPNFQPSQ (114 aa)) is disordered. Over residues 271-284 (EEEEEEEEEEEEEC) the composition is skewed to acidic residues. Residues 291 to 305 (TSSSLQGTPNFQPSQ) show a composition bias toward polar residues. A helical transmembrane segment spans residues 347-370 (LAVVIGVFVLCWFPFFFSYSLGAI). The Extracellular segment spans residues 371–379 (CPQHCKVPH). A helical membrane pass occupies residues 380 to 382 (GLF).

The protein belongs to the G-protein coupled receptor 1 family. Adrenergic receptor subfamily. ADRA2B sub-subfamily. As to quaternary structure, interacts with RAB26. Interacts with PPP1R9B. Interacts with GGA1, GGA2 and GGA3.

It is found in the cell membrane. In terms of biological role, alpha-2 adrenergic receptors mediate the catecholamine-induced inhibition of adenylate cyclase through the action of G proteins. In Didelphis virginiana (North American opossum), this protein is Alpha-2B adrenergic receptor (ADRA2B).